The primary structure comprises 248 residues: tRNA (guanine-N(1)-)-methyltransferase (248 aa).

S-adenosyl-L-methionine is bound by residues Gly-113 and 133–138 (IGDFVL).

This sequence belongs to the RNA methyltransferase TrmD family. Homodimer.

The protein localises to the cytoplasm. It carries out the reaction guanosine(37) in tRNA + S-adenosyl-L-methionine = N(1)-methylguanosine(37) in tRNA + S-adenosyl-L-homocysteine + H(+). Functionally, specifically methylates guanosine-37 in various tRNAs. This is tRNA (guanine-N(1)-)-methyltransferase from Dehalococcoides mccartyi (strain ATCC BAA-2266 / KCTC 15142 / 195) (Dehalococcoides ethenogenes (strain 195)).